A 1829-amino-acid polypeptide reads, in one-letter code: Iron-regulated protein FrpC (1829 aa).

22 Hemolysin-type calcium-binding repeats span residues 869–886 (FGHN…NDTL), 887–904 (IGGA…SDTY), 1015–1032 (NGGL…DDLL), 1033–1050 (NGDA…NDTL), 1051–1068 (DGGE…NDAL), 1069–1086 (NGGE…NDTL), 1087–1104 (IGGA…SDTY), 1215–1232 (NGGL…DDLL), 1233–1250 (NGDA…NDTL), 1251–1268 (DGGE…NDAL), 1269–1286 (NGGE…NDTL), 1287–1304 (IGGA…SDTY), 1415–1432 (NGGL…DDLL), 1433–1450 (NGDA…NDTL), 1451–1468 (NGGE…NDAL), 1469–1486 (NGGE…NDTL), 1487–1504 (IGGA…SDTY), 1615–1632 (NGGL…DDLL), 1633–1650 (NGDA…NDTL), 1651–1668 (DGGE…NDAL), 1669–1686 (NGGE…NDTL), and 1687–1704 (IGGA…SDTY). The tract at residues 1671-1690 (GEGNDHLNGEDGNDTLIGGA) is disordered.

The protein belongs to the RTX prokaryotic toxin (TC 1.C.11) family.

The protein localises to the cell outer membrane. It localises to the secreted. In terms of biological role, may participate in the pathogenesis of meningococcal disease. The sequence is that of Iron-regulated protein FrpC (frpC) from Neisseria meningitidis serogroup B (strain ATCC BAA-335 / MC58).